The chain runs to 612 residues: Dihydroxy-acid dehydratase (612 aa).

Residue D81 participates in Mg(2+) binding. C122 contacts [2Fe-2S] cluster. 2 residues coordinate Mg(2+): D123 and K124. K124 carries the post-translational modification N6-carboxylysine. C193 provides a ligand contact to [2Fe-2S] cluster. Residue E489 coordinates Mg(2+). Catalysis depends on S515, which acts as the Proton acceptor.

This sequence belongs to the IlvD/Edd family. As to quaternary structure, homodimer. The cofactor is [2Fe-2S] cluster. Mg(2+) serves as cofactor.

It carries out the reaction (2R)-2,3-dihydroxy-3-methylbutanoate = 3-methyl-2-oxobutanoate + H2O. It catalyses the reaction (2R,3R)-2,3-dihydroxy-3-methylpentanoate = (S)-3-methyl-2-oxopentanoate + H2O. It participates in amino-acid biosynthesis; L-isoleucine biosynthesis; L-isoleucine from 2-oxobutanoate: step 3/4. The protein operates within amino-acid biosynthesis; L-valine biosynthesis; L-valine from pyruvate: step 3/4. Functionally, functions in the biosynthesis of branched-chain amino acids. Catalyzes the dehydration of (2R,3R)-2,3-dihydroxy-3-methylpentanoate (2,3-dihydroxy-3-methylvalerate) into 2-oxo-3-methylpentanoate (2-oxo-3-methylvalerate) and of (2R)-2,3-dihydroxy-3-methylbutanoate (2,3-dihydroxyisovalerate) into 2-oxo-3-methylbutanoate (2-oxoisovalerate), the penultimate precursor to L-isoleucine and L-valine, respectively. This chain is Dihydroxy-acid dehydratase, found in Xanthomonas campestris pv. campestris (strain 8004).